The sequence spans 272 residues: Tryptophan synthase alpha chain (272 aa).

Active-site proton acceptor residues include Glu49 and Asp60.

The protein belongs to the TrpA family. In terms of assembly, tetramer of two alpha and two beta chains.

The catalysed reaction is (1S,2R)-1-C-(indol-3-yl)glycerol 3-phosphate + L-serine = D-glyceraldehyde 3-phosphate + L-tryptophan + H2O. It participates in amino-acid biosynthesis; L-tryptophan biosynthesis; L-tryptophan from chorismate: step 5/5. Its function is as follows. The alpha subunit is responsible for the aldol cleavage of indoleglycerol phosphate to indole and glyceraldehyde 3-phosphate. In Polaromonas naphthalenivorans (strain CJ2), this protein is Tryptophan synthase alpha chain.